The following is a 418-amino-acid chain: Serine hydroxymethyltransferase (418 aa).

Residues Leu121 and 125–127 contribute to the (6S)-5,6,7,8-tetrahydrofolate site; that span reads GHL. Position 230 is an N6-(pyridoxal phosphate)lysine (Lys230). (6S)-5,6,7,8-tetrahydrofolate is bound at residue 356–358; the sequence is SPF.

This sequence belongs to the SHMT family. Homodimer. The cofactor is pyridoxal 5'-phosphate.

Its subcellular location is the cytoplasm. The catalysed reaction is (6R)-5,10-methylene-5,6,7,8-tetrahydrofolate + glycine + H2O = (6S)-5,6,7,8-tetrahydrofolate + L-serine. It participates in one-carbon metabolism; tetrahydrofolate interconversion. Its pathway is amino-acid biosynthesis; glycine biosynthesis; glycine from L-serine: step 1/1. Its function is as follows. Catalyzes the reversible interconversion of serine and glycine with tetrahydrofolate (THF) serving as the one-carbon carrier. This reaction serves as the major source of one-carbon groups required for the biosynthesis of purines, thymidylate, methionine, and other important biomolecules. Also exhibits THF-independent aldolase activity toward beta-hydroxyamino acids, producing glycine and aldehydes, via a retro-aldol mechanism. This chain is Serine hydroxymethyltransferase, found in Shewanella halifaxensis (strain HAW-EB4).